A 589-amino-acid chain; its full sequence is Muscarinic acetylcholine receptor M3 (589 aa).

The Extracellular portion of the chain corresponds to 1 to 66 (MTLHSNSTTS…DPLGGHTIWQ (66 aa)). Asn6, Asn15, Asn41, Asn48, and Asn52 each carry an N-linked (GlcNAc...) asparagine glycan. Residues 67-90 (VVFIAFLTGFLALVTIIGNILVIV) traverse the membrane as a helical segment. The Cytoplasmic segment spans residues 91–103 (AFKVNKQLKTVNN). Residues 104–129 (YFLLSLACADLIIGVISMNLFTTYII) traverse the membrane as a helical segment. Over 130 to 141 (MNRWALGNLACD) the chain is Extracellular. An intrachain disulfide couples Cys140 to Cys220. A helical membrane pass occupies residues 142–163 (LWLSIDYVASNASVMNLLVISF). Residues 164–183 (DRYFSITRPLTYRAKRTTKR) lie on the Cytoplasmic side of the membrane. A helical transmembrane segment spans residues 184-205 (AGVMIGLAWVISFVLWAPAILF). Residues 206–228 (WQYFVGKRTVPPGECFIQFLSEP) are Extracellular-facing. Residues 229–251 (TITFGTAIAAFYMPVTIMTILYW) traverse the membrane as a helical segment. Topologically, residues 252 to 490 (RIYKETEKRT…SLIKEKKAAQ (239 aa)) are cytoplasmic. The Basolateral sorting signal motif lies at 274–280 (AEAENFV). Disordered regions lie at residues 275–295 (EAEN…YELQ) and 323–356 (AEQM…EEDI). Polar residues predominate over residues 283-295 (TGSSRSCSSYELQ). The span at 333–344 (SDSWNNNDAAAS) shows a compositional bias: low complexity. Ser384 bears the Phosphoserine mark. Residues 491–513 (TLSAILLAFIITWTPYNIMVLVN) traverse the membrane as a helical segment. At 514-525 (TFCDSCIPKTYW) the chain is on the extracellular side. A disulfide bridge connects residues Cys516 and Cys519. Residues 526–545 (NLGYWLCYINSTVNPVCYAL) traverse the membrane as a helical segment. Residues 546-589 (CNKTFRTTFKMLLLCQCDKRKRRKQQYQQRQSVIFHKRVPEQAL) lie on the Cytoplasmic side of the membrane.

The protein belongs to the G-protein coupled receptor 1 family. Muscarinic acetylcholine receptor subfamily. CHRM3 sub-subfamily. As to quaternary structure, homodimer; the dimers can form tetramers. Interacts with NALCN. Interacts with TMEM147. Expressed in cerebral cortex, submandibular gland, hypothalamus, pancreas, liver, and ileum.

The protein resides in the cell membrane. Its subcellular location is the postsynaptic cell membrane. It localises to the basolateral cell membrane. The protein localises to the endoplasmic reticulum membrane. In terms of biological role, the muscarinic acetylcholine receptor mediates various cellular responses, including inhibition of adenylate cyclase, breakdown of phosphoinositides and modulation of potassium channels through the action of G proteins. Primary transducing effect is Pi turnover. The sequence is that of Muscarinic acetylcholine receptor M3 (Chrm3) from Mus musculus (Mouse).